The chain runs to 224 residues: 4-aminobenzoate synthase (224 aa).

Fe(2+) contacts are provided by Glu77, His84, Glu138, His169, Asp173, and His176.

This sequence belongs to the CADD family. As to quaternary structure, homodimer. The cofactor is Fe(2+). Mn(2+) serves as cofactor.

In terms of biological role, involved in de novo para-aminobenzoate (PABA) biosynthesis. Acts as a self-sacrificing or 'suicide' enzyme that utilizes its own active site tyrosine residue(s) as the substrate for PABA synthesis. The side chain of the tyrosine residue is released from the protein backbone via cleavage of the C(alpha)-C(beta) bond, leaving a glycine in place of the original tyrosine residue. Reaction requires O(2) and a reduced dimetal cofactor. The protein is 4-aminobenzoate synthase of Chlamydia pneumoniae (Chlamydophila pneumoniae).